We begin with the raw amino-acid sequence, 136 residues long: MRKKHLREANTKLARDLGVAKVELAQEIQKNEDLTAANGRLVTAVNRQVAVNQNLRSENADLRSQLDTARRTFGEAFVKGSLAPVGPNRPNRQKLTEREVRDIREAYRGGMKQKDLADNYGVNPATISRTVRGIYH.

The polypeptide is Gene 46 protein (46) (Mycobacterium (Mycobacteriophage D29)).